Reading from the N-terminus, the 540-residue chain is CUB domain-containing protein 2 (540 aa).

Positions 1–24 are cleaved as a signal peptide; it reads MLAELGACLLLAMVLLDSDPGTQA. Residues 25–516 lie on the Extracellular side of the membrane; it reads MEGVKCGGVL…GTMVTQDTSD (492 aa). Disulfide bonds link Cys30-Cys56, Cys83-Cys106, Cys145-Cys171, Cys198-Cys218, Cys257-Cys283, and Cys314-Cys336. 3 consecutive CUB domains span residues 30–143, 145–255, and 257–373; these read CGGV…YQKD, CGGV…YFSG, and CQEV…YIGV. An N-linked (GlcNAc...) asparagine glycan is attached at Asn40. The N-linked (GlcNAc...) asparagine glycan is linked to Asn267. Asn377, Asn435, and Asn436 each carry an N-linked (GlcNAc...) asparagine glycan. A helical transmembrane segment spans residues 517–537; that stretch reads IVFLGLCILAGVLMIIAIVVL. Topologically, residues 538-540 are cytoplasmic; that stretch reads MLL.

It localises to the membrane. In Mus musculus (Mouse), this protein is CUB domain-containing protein 2 (Cdcp2).